Consider the following 194-residue polypeptide: Peptide deformylase (194 aa).

2 residues coordinate Fe cation: cysteine 105 and histidine 147. Residue glutamate 148 is part of the active site. Histidine 151 provides a ligand contact to Fe cation.

It belongs to the polypeptide deformylase family. Requires Fe(2+) as cofactor.

The catalysed reaction is N-terminal N-formyl-L-methionyl-[peptide] + H2O = N-terminal L-methionyl-[peptide] + formate. Functionally, removes the formyl group from the N-terminal Met of newly synthesized proteins. Requires at least a dipeptide for an efficient rate of reaction. N-terminal L-methionine is a prerequisite for activity but the enzyme has broad specificity at other positions. This is Peptide deformylase from Flavobacterium psychrophilum (strain ATCC 49511 / DSM 21280 / CIP 103535 / JIP02/86).